Consider the following 71-residue polypeptide: Small ribosomal subunit protein bS21 (71 aa).

The tract at residues Arg47–Tyr71 is disordered. The segment covering Val60 to Tyr71 has biased composition (basic and acidic residues).

Belongs to the bacterial ribosomal protein bS21 family.

This is Small ribosomal subunit protein bS21 from Histophilus somni (strain 129Pt) (Haemophilus somnus).